Consider the following 141-residue polypeptide: Nucleoside diphosphate kinase (141 aa).

Residues K11, F59, R87, T93, R104, and N114 each contribute to the ATP site. H117 (pros-phosphohistidine intermediate) is an active-site residue.

This sequence belongs to the NDK family. As to quaternary structure, homotetramer. It depends on Mg(2+) as a cofactor.

Its subcellular location is the cytoplasm. The enzyme catalyses a 2'-deoxyribonucleoside 5'-diphosphate + ATP = a 2'-deoxyribonucleoside 5'-triphosphate + ADP. It carries out the reaction a ribonucleoside 5'-diphosphate + ATP = a ribonucleoside 5'-triphosphate + ADP. Major role in the synthesis of nucleoside triphosphates other than ATP. The ATP gamma phosphate is transferred to the NDP beta phosphate via a ping-pong mechanism, using a phosphorylated active-site intermediate. This chain is Nucleoside diphosphate kinase, found in Paraburkholderia phymatum (strain DSM 17167 / CIP 108236 / LMG 21445 / STM815) (Burkholderia phymatum).